Reading from the N-terminus, the 316-residue chain is Beta-agarase (316 aa).

A signal peptide spans 1–18 (MKRKLFTICLASLQFACA). Residues 27–315 (YEWDIYPVPA…WIRVYTLVPE (289 aa)) form the GH16 domain. Substrate contacts are provided by residues Trp-78, 87–97 (QRDHVSVSDGF), and 101–103 (RAS). The Nucleophile role is filled by Glu-167. The Proton donor role is filled by Glu-172. Residue Arg-197 participates in substrate binding.

The protein belongs to the glycosyl hydrolase 16 family.

The enzyme catalyses Hydrolysis of (1-&gt;4)-beta-D-galactosidic linkages in agarose, giving the tetramer as the predominant product.. Cleaves the beta-1,4-linkages between beta-D-galactose and alpha-L-3,6-anhydro-galactose residues in agarose. Cleaves agarose in a random manner with retention of the anomeric-bond configuration, producing beta-anomers that give rise progressively to alpha-anomers when mutarotation takes place. This is Beta-agarase from Phocaeicola plebeius (strain DSM 17135 / JCM 12973 / CCUG 54634 / M2) (Bacteroides plebeius).